The following is a 1283-amino-acid chain: Oxysterol-binding protein homolog 2 (1283 aa).

Residue Ser-2 is modified to N-acetylserine. Ser-7 is modified (phosphoserine). ANK repeat units lie at residues 106-134 (NGNT…SIND) and 206-235 (TGTT…EATV). Positions 289-386 (PPTYKGFLKK…WVNAIQSAIR (98 aa)) constitute a PH domain. Ser-422, Ser-445, Ser-451, Ser-455, Ser-458, Ser-459, and Ser-486 each carry phosphoserine. At Thr-488 the chain carries Phosphothreonine. Composition is skewed to polar residues over residues 504 to 518 (SNTL…SGSG) and 530 to 551 (ANLS…NNYI). Disordered regions lie at residues 504 to 571 (SNTL…LGIN) and 702 to 721 (TAGN…DTTA). 2 positions are modified to phosphoserine: Ser-512 and Ser-515. The segment covering 554 to 568 (FEGDEANSDDEEEDL) has biased composition (acidic residues). The segment covering 707–716 (ESLENDKEQE) has biased composition (basic and acidic residues). Position 717 is a phosphoserine (Ser-717). An FFAT motif is present at residues 745–751 (EFYDAAE). The disordered stretch occupies residues 767–834 (STAAAPKHAP…SLKNFKAEDK (68 aa)). Phosphothreonine is present on Thr-783. Residue Ser-787 is modified to Phosphoserine. Composition is skewed to basic and acidic residues over residues 791-810 (QDEK…KFEK) and 818-834 (DEPK…AEDK). Ser-825 and Ser-1151 each carry phosphoserine. An OSBP-related domain (ORD) region spans residues 897–1268 (SLWAVLKSMV…KYWRYTGKYW (372 aa)).

It belongs to the OSBP family. Interacts with SCS2.

Its subcellular location is the cell membrane. The protein resides in the endoplasmic reticulum membrane. In terms of biological role, lipid transport protein (LTP) involved in non-vesicular transfer of lipids between membranes. Functions in phosphoinositide-coupled directional transport of various lipids by carrying the lipid molecule in a hydrophobic pocket and transferring it between membranes through the cytosol. Involved in maintenance of intracellular sterol distribution and homeostasis. Binds and transports sterol. Plays a role in the positive regulation of vesicular transport of ceramide from the ER to the Golgi, negatively regulating COPII-mediated ER export of cargos. In Saccharomyces cerevisiae (strain ATCC 204508 / S288c) (Baker's yeast), this protein is Oxysterol-binding protein homolog 2.